The chain runs to 87 residues: Cell division topological specificity factor (87 aa).

The protein belongs to the MinE family.

Prevents the cell division inhibition by proteins MinC and MinD at internal division sites while permitting inhibition at polar sites. This ensures cell division at the proper site by restricting the formation of a division septum at the midpoint of the long axis of the cell. The protein is Cell division topological specificity factor of Rhizobium meliloti (strain 1021) (Ensifer meliloti).